The chain runs to 354 residues: tRNA N6-adenosine threonylcarbamoyltransferase (354 aa).

Positions 111 and 115 each coordinate Fe cation. Substrate-binding positions include 134–138, Asp167, Gly180, and Asn279; that span reads LVSGG. Asp319 is a Fe cation binding site.

It belongs to the KAE1 / TsaD family. Fe(2+) serves as cofactor.

It localises to the cytoplasm. The enzyme catalyses L-threonylcarbamoyladenylate + adenosine(37) in tRNA = N(6)-L-threonylcarbamoyladenosine(37) in tRNA + AMP + H(+). In terms of biological role, required for the formation of a threonylcarbamoyl group on adenosine at position 37 (t(6)A37) in tRNAs that read codons beginning with adenine. Is involved in the transfer of the threonylcarbamoyl moiety of threonylcarbamoyl-AMP (TC-AMP) to the N6 group of A37, together with TsaE and TsaB. TsaD likely plays a direct catalytic role in this reaction. This chain is tRNA N6-adenosine threonylcarbamoyltransferase, found in Neisseria meningitidis.